The sequence spans 116 residues: Large ribosomal subunit protein bL17 (116 aa).

It belongs to the bacterial ribosomal protein bL17 family. Part of the 50S ribosomal subunit. Contacts protein L32.

In Parasynechococcus marenigrum (strain WH8102), this protein is Large ribosomal subunit protein bL17.